The following is a 98-amino-acid chain: MPYIYTNLFLAFLTSLLGMLIYRSHLMSSLLCLEGMMLSMFIMTSLTILNLHFTLSNMIPIILLVFAACEAAVGLALLVMVSNTYGLDYVQNLNLLQC.

A run of 3 helical transmembrane segments spans residues 1-21 (MPYI…GMLI), 29-49 (SLLC…LTIL), and 61-81 (IILL…LVMV).

Belongs to the complex I subunit 4L family. As to quaternary structure, core subunit of respiratory chain NADH dehydrogenase (Complex I) which is composed of 45 different subunits.

It localises to the mitochondrion inner membrane. It carries out the reaction a ubiquinone + NADH + 5 H(+)(in) = a ubiquinol + NAD(+) + 4 H(+)(out). Functionally, core subunit of the mitochondrial membrane respiratory chain NADH dehydrogenase (Complex I) which catalyzes electron transfer from NADH through the respiratory chain, using ubiquinone as an electron acceptor. Part of the enzyme membrane arm which is embedded in the lipid bilayer and involved in proton translocation. The protein is NADH-ubiquinone oxidoreductase chain 4L (MT-ND4L) of Cephalopachus bancanus (Western tarsier).